A 420-amino-acid polypeptide reads, in one-letter code: Putative competence-damage inducible protein (420 aa).

Belongs to the CinA family.

The chain is Putative competence-damage inducible protein from Lactiplantibacillus plantarum (strain ATCC BAA-793 / NCIMB 8826 / WCFS1) (Lactobacillus plantarum).